The primary structure comprises 291 residues: Protease HtpX (291 aa).

Transmembrane regions (helical) follow at residues 4-24 (IALF…VLNI) and 36-56 (LSGL…ISLM). Histidine 143 provides a ligand contact to Zn(2+). Residue glutamate 144 is part of the active site. Zn(2+) is bound at residue histidine 147. 2 helical membrane passes run 151–171 (GDMI…IFLS) and 199–219 (FIVS…LTMW). Zn(2+) is bound at residue glutamate 225.

The protein belongs to the peptidase M48B family. Requires Zn(2+) as cofactor.

The protein localises to the cell inner membrane. The protein is Protease HtpX of Aliivibrio fischeri (strain MJ11) (Vibrio fischeri).